The chain runs to 887 residues: Valine--tRNA ligase (887 aa).

The short motif at 47–57 (PNVTGALHMGH) is the 'HIGH' region element. Positions 527-531 (KMSKS) match the 'KMSKS' region motif. K530 is a binding site for ATP. The stretch at 817–885 (LVNVEEEEKR…LLASLEKIRK (69 aa)) forms a coiled coil.

Belongs to the class-I aminoacyl-tRNA synthetase family. ValS type 1 subfamily. In terms of assembly, monomer.

The protein resides in the cytoplasm. It carries out the reaction tRNA(Val) + L-valine + ATP = L-valyl-tRNA(Val) + AMP + diphosphate. Its function is as follows. Catalyzes the attachment of valine to tRNA(Val). As ValRS can inadvertently accommodate and process structurally similar amino acids such as threonine, to avoid such errors, it has a 'posttransfer' editing activity that hydrolyzes mischarged Thr-tRNA(Val) in a tRNA-dependent manner. The polypeptide is Valine--tRNA ligase (Geobacter sulfurreducens (strain ATCC 51573 / DSM 12127 / PCA)).